We begin with the raw amino-acid sequence, 501 residues long: ATP synthase subunit alpha (501 aa).

An ATP-binding site is contributed by 169–176; sequence GDRQTGKT.

This sequence belongs to the ATPase alpha/beta chains family. In terms of assembly, F-type ATPases have 2 components, CF(1) - the catalytic core - and CF(0) - the membrane proton channel. CF(1) has five subunits: alpha(3), beta(3), gamma(1), delta(1), epsilon(1). CF(0) has three main subunits: a(1), b(2) and c(9-12). The alpha and beta chains form an alternating ring which encloses part of the gamma chain. CF(1) is attached to CF(0) by a central stalk formed by the gamma and epsilon chains, while a peripheral stalk is formed by the delta and b chains.

It is found in the cell membrane. It catalyses the reaction ATP + H2O + 4 H(+)(in) = ADP + phosphate + 5 H(+)(out). Produces ATP from ADP in the presence of a proton gradient across the membrane. The alpha chain is a regulatory subunit. The protein is ATP synthase subunit alpha of Streptococcus gordonii (strain Challis / ATCC 35105 / BCRC 15272 / CH1 / DL1 / V288).